A 21-amino-acid chain; its full sequence is MAKINELLRESTTTNSNSIGR.

The tract at residues 1 to 21 (MAKINELLRESTTTNSNSIGR) is disordered. Polar residues predominate over residues 10 to 21 (ESTTTNSNSIGR).

It belongs to the T4 phage capsid protein family. In terms of assembly, homopentamer. A total of 55 subunits of gp24 forms the 11 pentamers. Interacts with portal protein gp20. Interacts with gp23 that forms 160 hexamers. In terms of processing, proteolytic cleavage give rise to gp24*.

The protein localises to the virion. Its function is as follows. Capsid protein that self-associates to form 11 pentons, building the T=13 laevo capsid in association with 160 hexamers of gp23* and one dodecamer of gp20. This Escherichia coli (Bacteriophage T6) protein is Capsid vertex protein gp24.